Reading from the N-terminus, the 154-residue chain is Protein X (154 aa).

The tract at residues 68 to 117 is mitochondrial targeting sequence; the sequence is PCALRFTSARCMETTVNAPRNLPTVLHKRTLGLSAMSTTKIETYFKDCVF.

This sequence belongs to the orthohepadnavirus protein X family. As to quaternary structure, may form homodimer. May interact with host CEBPA, CFLAR, CREB1, DDB1, E4F1, HBXIP, HSPD1/HSP60, NFKBIA, POLR2E and SMAD4. Interacts with host SMC5-SMC6 complex and induces its degradation. Interacts with host TRPC4AP; leading to prevent ubiquitination of TRPC4AP. Interacts with host PLSCR1; this interaction promotes ubiquitination and degradation of HBx and impairs HBx-mediated cell proliferation. Post-translationally, a fraction may be phosphorylated in insect cells and HepG2 cells, a human hepatoblastoma cell line. Phosphorylated in vitro by host protein kinase C or mitogen-activated protein kinase. N-acetylated in insect cells.

The protein resides in the host cytoplasm. The protein localises to the host nucleus. It localises to the host mitochondrion. Its function is as follows. Multifunctional protein that plays a role in silencing host antiviral defenses and promoting viral transcription. Does not seem to be essential for HBV infection. May be directly involved in development of cirrhosis and liver cancer (hepatocellular carcinoma). Most of cytosolic activities involve modulation of cytosolic calcium. The effect on apoptosis is controversial depending on the cell types in which the studies have been conducted. May induce apoptosis by localizing in mitochondria and causing loss of mitochondrial membrane potential. May also modulate apoptosis by binding host CFLAR, a key regulator of the death-inducing signaling complex (DISC). Promotes viral transcription by using the host E3 ubiquitin ligase DDB1 to target the SMC5-SMC6 complex to proteasomal degradation. This host complex would otherwise bind to viral episomal DNA, and prevents its transcription. Moderately stimulates transcription of many different viral and cellular transcription elements. Promoters and enhancers stimulated by HBx contain DNA binding sites for NF-kappa-B, AP-1, AP-2, c-EBP, ATF/CREB, or the calcium-activated factor NF-AT. The polypeptide is Protein X (Gorilla gorilla (western gorilla)).